The primary structure comprises 145 residues: Bacilliredoxin GK2368 (145 aa).

Belongs to the bacilliredoxin family.

This chain is Bacilliredoxin GK2368, found in Geobacillus kaustophilus (strain HTA426).